The chain runs to 203 residues: Signal peptidase I (203 aa).

The interval 1–26 (MSSESDSPTPQTPPAQPAASQPKADS) is disordered. The Cytoplasmic portion of the chain corresponds to 1–33 (MSSESDSPTPQTPPAQPAASQPKADSPLMEGIK). Residues 17–26 (PAASQPKADS) are compositionally biased toward low complexity. A helical transmembrane segment spans residues 34–50 (TIGLSVVLALGIRTFVA). Over 51-203 (EARYIPSESM…LGELGPPPSY (153 aa)) the chain is Extracellular. Catalysis depends on residues S59 and K109.

This sequence belongs to the peptidase S26 family.

The protein resides in the cell membrane. It catalyses the reaction Cleavage of hydrophobic, N-terminal signal or leader sequences from secreted and periplasmic proteins.. This Leptolyngbya laminosa (Phormidium laminosum) protein is Signal peptidase I (lepB).